The sequence spans 488 residues: UDP-N-acetylmuramoyl-L-alanyl-D-glutamate--2,6-diaminopimelate ligase (488 aa).

UDP-N-acetyl-alpha-D-muramoyl-L-alanyl-D-glutamate is bound by residues L24, S26, and 41–43 (HQV). 113 to 119 (GTNGKTT) provides a ligand contact to ATP. Residues N154, 155 to 156 (TT), S182, Q188, and R190 each bind UDP-N-acetyl-alpha-D-muramoyl-L-alanyl-D-glutamate. K222 is modified (N6-carboxylysine). Meso-2,6-diaminopimelate is bound by residues R386, 410–413 (DNPR), G461, and E465. The Meso-diaminopimelate recognition motif signature appears at 410–413 (DNPR).

The protein belongs to the MurCDEF family. MurE subfamily. Requires Mg(2+) as cofactor. Post-translationally, carboxylation is probably crucial for Mg(2+) binding and, consequently, for the gamma-phosphate positioning of ATP.

The protein localises to the cytoplasm. The enzyme catalyses UDP-N-acetyl-alpha-D-muramoyl-L-alanyl-D-glutamate + meso-2,6-diaminopimelate + ATP = UDP-N-acetyl-alpha-D-muramoyl-L-alanyl-gamma-D-glutamyl-meso-2,6-diaminopimelate + ADP + phosphate + H(+). The protein operates within cell wall biogenesis; peptidoglycan biosynthesis. Its function is as follows. Catalyzes the addition of meso-diaminopimelic acid to the nucleotide precursor UDP-N-acetylmuramoyl-L-alanyl-D-glutamate (UMAG) in the biosynthesis of bacterial cell-wall peptidoglycan. The protein is UDP-N-acetylmuramoyl-L-alanyl-D-glutamate--2,6-diaminopimelate ligase of Haemophilus influenzae (strain 86-028NP).